The chain runs to 276 residues: Vitamin B12-binding protein (276 aa).

The N-terminal stretch at 1 to 20 (MLVIRLIACTFLFITPSLLA) is a signal peptide. Positions 27 to 274 (RIISLAPHAT…QVCTYLKIAQ (248 aa)) constitute a Fe/B12 periplasmic-binding domain. Tyrosine 54 serves as a coordination point for cyanocob(III)alamin. Cysteine 187 and cysteine 267 are oxidised to a cystine.

This sequence belongs to the BtuF family. In terms of assembly, the complex is composed of two ATP-binding proteins (BtuD), two transmembrane proteins (BtuC) and a solute-binding protein (BtuF).

The protein resides in the periplasm. Part of the ABC transporter complex BtuCDF involved in vitamin B12 import. Binds vitamin B12 and delivers it to the periplasmic surface of BtuC. The sequence is that of Vitamin B12-binding protein from Vibrio cholerae serotype O1 (strain ATCC 39541 / Classical Ogawa 395 / O395).